The chain runs to 393 residues: Large ribosomal subunit protein uL2m (393 aa).

The N-terminal 43 residues, 1-43 (MLVLGSLRSALSCSSTASLISKRNPCYPYGILCRTLSQSVKLW), are a transit peptide targeting the mitochondrion. The interval 337 to 393 (AMNKCDHPHGGGRGKSKSNKLSMSPWGQLAKGYKTRRGKNQNRMKVKDRPRGKDARL) is disordered. Over residues 369 to 380 (YKTRRGKNQNRM) the composition is skewed to basic residues. Residues 381–393 (KVKDRPRGKDARL) show a composition bias toward basic and acidic residues.

It belongs to the universal ribosomal protein uL2 family. As to quaternary structure, component of the mitochondrial large ribosomal subunit (mt-LSU). Mature yeast 74S mitochondrial ribosomes consist of a small (37S) and a large (54S) subunit. The 37S small subunit contains a 15S ribosomal RNA (15S mt-rRNA) and 34 different proteins. The 54S large subunit contains a 21S rRNA (21S mt-rRNA) and 46 different proteins. uL2m has a Na/K ligand binding site.

It localises to the mitochondrion. Its function is as follows. Component of the mitochondrial ribosome (mitoribosome), a dedicated translation machinery responsible for the synthesis of mitochondrial genome-encoded proteins, including at least some of the essential transmembrane subunits of the mitochondrial respiratory chain. The mitoribosomes are attached to the mitochondrial inner membrane and translation products are cotranslationally integrated into the membrane. This chain is Large ribosomal subunit protein uL2m (RML2), found in Saccharomyces cerevisiae (strain ATCC 204508 / S288c) (Baker's yeast).